We begin with the raw amino-acid sequence, 135 residues long: MVSFRTMWSVVVVVVVASLASSGVQGRSVEGSSRMERLLSSGSSSSEPLSFLSQDQSVNKRQVFDQACKGIYDRAIFKKLDRVCEDCYNLYRKPYVATTCRQNCYANSVFRQCLDDLLLIDVLDEYISGVQTVGK.

Residues 1 to 26 (MVSFRTMWSVVVVVVVASLASSGVQG) form the signal peptide. Gln-62 is modified (pyrrolidone carboxylic acid). 3 cysteine pairs are disulfide-bonded: Cys-68–Cys-104, Cys-84–Cys-100, and Cys-87–Cys-113. A Valine amide modification is found at Val-133.

Belongs to the arthropod CHH/MIH/GIH/VIH hormone family. Produced by the medulla terminalis X-organ in the eyestalks and transported to the sinus gland where they are stored and released.

The protein resides in the secreted. Functionally, hormone found in the sinus gland of isopods and decapods which controls the blood sugar level. Has a secretagogue action over the amylase released from the midgut gland. May act as a stress hormone and may be involved in the control of molting and reproduction. In Faxonius limosus (Spinycheek crayfish), this protein is Crustacean hyperglycemic hormones A* (CHHA*).